The sequence spans 227 residues: Zeamatin (227 aa).

Residues 1–20 (MAGSVAIVGIFVALLAVAGE) form the signal peptide. Cystine bridges form between C30/C226, C72/C82, C87/C93, C139/C215, C145/C198, C153/C163, C167/C176, and C177/C185.

It belongs to the thaumatin family.

In terms of biological role, has antifungal activity. Inhibits Candida albicans and Trichoderma reesei; marginal inhibition observed against Alternaria solani and Neurospora crassa. The protein is Zeamatin (Zlp) of Zea mays (Maize).